Reading from the N-terminus, the 444-residue chain is Glutamyl-tRNA reductase (444 aa).

Substrate contacts are provided by residues 49–52 (TCNR), serine 109, 114–116 (ETQ), and glutamine 120. The Nucleophile role is filled by cysteine 50. Position 189–194 (189–194 (GAGKMG)) interacts with NADP(+).

The protein belongs to the glutamyl-tRNA reductase family. As to quaternary structure, homodimer.

The enzyme catalyses (S)-4-amino-5-oxopentanoate + tRNA(Glu) + NADP(+) = L-glutamyl-tRNA(Glu) + NADPH + H(+). It participates in porphyrin-containing compound metabolism; protoporphyrin-IX biosynthesis; 5-aminolevulinate from L-glutamyl-tRNA(Glu): step 1/2. In terms of biological role, catalyzes the NADPH-dependent reduction of glutamyl-tRNA(Glu) to glutamate 1-semialdehyde (GSA). This is Glutamyl-tRNA reductase from Bacillus anthracis (strain A0248).